The following is a 1036-amino-acid chain: PDZ domain-containing RING finger protein 4 (1036 aa).

The RING-type; degenerate zinc finger occupies Cys-18–Cys-56. Over residues Ala-129–Pro-160 the composition is skewed to gly residues. Residues Ala-129 to Gly-161 form a disordered region. PDZ domains lie at Thr-224 to Thr-314 and Glu-402 to Pro-486. A disordered region spans residues His-515–Gln-590. A compositionally biased stretch (basic and acidic residues) spans Asn-548–Glu-566. Residues Asn-655–Leu-689 adopt a coiled-coil conformation. Residues Glu-726–Ser-735 show a composition bias toward basic and acidic residues. The disordered stretch occupies residues Glu-726 to Gln-819. The segment covering Ser-736–Leu-750 has biased composition (polar residues). The span at Ser-774 to Glu-799 shows a compositional bias: low complexity. The span at Glu-805–Gln-819 shows a compositional bias: basic and acidic residues.

This is PDZ domain-containing RING finger protein 4 (PDZRN4) from Homo sapiens (Human).